The primary structure comprises 514 residues: Na(+)/H(+) antiporter NhaB (514 aa).

The next 11 helical transmembrane spans lie at 13 to 33 (FMGNSPDWYKLAIITFLIINP), 34 to 54 (LIFFFVDPFIAGWLLVVEFIF), 96 to 116 (VILLLVFMVAGIYFMKQLLLF), 136 to 156 (CFASAFLSAFLDALTVIAVVI), 203 to 223 (LMMHAGVGTALGGVMTMVGEP), 236 to 256 (FVTFFIRMSPVTIPVFFAGLA), 304 to 324 (ALIGIWLIVALALHLAEVGII), 349 to 369 (EEALPFTALLTVFFSVVAVII), 392 to 412 (LFYLFNGLLSAISDNVFVGTV), 448 to 468 (ATPNGQAAFLFLLTSALSPLI), and 479 to 499 (ALPYTIVMTLLGLLAVEFWLV).

Belongs to the NhaB Na(+)/H(+) (TC 2.A.34) antiporter family.

It is found in the cell inner membrane. The catalysed reaction is 2 Na(+)(in) + 3 H(+)(out) = 2 Na(+)(out) + 3 H(+)(in). In terms of biological role, na(+)/H(+) antiporter that extrudes sodium in exchange for external protons. The protein is Na(+)/H(+) antiporter NhaB of Proteus mirabilis (strain HI4320).